A 237-amino-acid polypeptide reads, in one-letter code: Protein VP5 (237 aa).

Over 1–148 the chain is Cytoplasmic; it reads MLSIIRRKTR…TKQRCKANLR (148 aa). A disordered region spans residues 84 to 237; the sequence is SSSKDPDISG…SKLGKSRDIC (154 aa). Composition is skewed to basic and acidic residues over residues 85 to 97 and 116 to 130; these read SSKD…QKDK and SRVR…HEPI. A helical membrane pass occupies residues 149 to 165; it reads GDSGFVSIGRSNHPKLS. Residues 166 to 237 are Extracellular-facing; it reads REDCHNTRVP…SKLGKSRDIC (72 aa). Residues 214 to 231 are compositionally biased toward basic residues; sequence RSHRRKKAKTRTKTSKLG.

The protein resides in the host membrane. In Drosophila x virus (isolate Chung/1996) (DXV), this protein is Protein VP5 (VP5).